Consider the following 469-residue polypeptide: Protein DETOXIFICATION 18 (469 aa).

12 consecutive transmembrane segments (helical) span residues 40–60, 73–93, 121–141, 152–172, 183–203, 206–226, 252–274, 293–313, 344–364, 374–394, 406–426, and 438–458; these read LPMI…VMFA, LANS…SGAL, LVFT…FLLL, ALYM…QNIL, PLVL…YALV, AGLG…IAFV, HVVL…YWAF, LVAI…GLSA, VLAL…VGLF, FASL…QGVL, LATV…SVLC, and WIGL…MTIF.

This sequence belongs to the multi antimicrobial extrusion (MATE) (TC 2.A.66.1) family.

It is found in the membrane. In Arabidopsis thaliana (Mouse-ear cress), this protein is Protein DETOXIFICATION 18.